Here is a 498-residue protein sequence, read N- to C-terminus: Hexokinase-1 (498 aa).

Residues A4–V24 traverse the membrane as a helical segment. Positions G35 to A487 constitute a Hexokinase domain. Residues T90–V228 are hexokinase small subdomain. The ADP site is built by G104, T105, and N106. D-glucose contacts are provided by T194, K195, N229, and D230. Residues N229–D476 form a hexokinase large subdomain region. T253 is an ADP binding site. D-glucose-binding residues include N256, E284, and E315. G441 provides a ligand contact to ADP.

It belongs to the hexokinase family.

It localises to the plastid. The protein localises to the chloroplast outer membrane. The enzyme catalyses a D-hexose + ATP = a D-hexose 6-phosphate + ADP + H(+). It carries out the reaction D-fructose + ATP = D-fructose 6-phosphate + ADP + H(+). It catalyses the reaction D-glucose + ATP = D-glucose 6-phosphate + ADP + H(+). Its pathway is carbohydrate metabolism; hexose metabolism. It functions in the pathway carbohydrate degradation; glycolysis; D-glyceraldehyde 3-phosphate and glycerone phosphate from D-glucose: step 1/4. Its function is as follows. Fructose and glucose phosphorylating enzyme. This Spinacia oleracea (Spinach) protein is Hexokinase-1 (HXK1).